A 341-amino-acid chain; its full sequence is MKALSKLKAEKGIWLVDAPKPVMGHNDLLIKIKKTAICGTDMHIYNWDEWSQKTIPVPMVVGHEYVGEVVDIGQEVRGFKIGDRVSGEGHITCGHCRNCRAGRTHLCRNTSGVGVNREGSFAEYLVIPAFNAFKIPDDISDDLASIFDPFGNAVHTALSFDLVGEDVLITGAGPIGIMAAAVCRHVGARHVVITDVNEYRLELARKMGATRAVNVSKENLKDVMKELGMTEGFDVGLEMSGVPSAFHAMLDTMNHGGKVAMLGIPSGEMAIDWSKVIFKGLVIKGIYGREMFETWYKMASLIQSGLDISPIITHHFKIDDFQQGFDAMGSGQSGKVILSWD.

C38 lines the Zn(2+) pocket. Active-site charge relay system residues include T40 and H43. Zn(2+) is bound by residues H63, E64, C93, C96, C99, and C107. NAD(+)-binding positions include I175, D195, R200, 262 to 264 (LGI), and 286 to 287 (IY).

The protein belongs to the zinc-containing alcohol dehydrogenase family. As to quaternary structure, homotetramer. Zn(2+) serves as cofactor.

It localises to the cytoplasm. The catalysed reaction is L-threonine + NAD(+) = (2S)-2-amino-3-oxobutanoate + NADH + H(+). Its pathway is amino-acid degradation; L-threonine degradation via oxydo-reductase pathway; glycine from L-threonine: step 1/2. Catalyzes the NAD(+)-dependent oxidation of L-threonine to 2-amino-3-ketobutyrate. The protein is L-threonine 3-dehydrogenase of Shewanella baltica (strain OS185).